A 244-amino-acid chain; its full sequence is DNA repair protein RecO (244 aa).

It belongs to the RecO family.

In terms of biological role, involved in DNA repair and RecF pathway recombination. In Polynucleobacter necessarius subsp. necessarius (strain STIR1), this protein is DNA repair protein RecO.